We begin with the raw amino-acid sequence, 291 residues long: Protease HtpX homolog (291 aa).

2 consecutive transmembrane segments (helical) span residues 4 to 24 and 38 to 58; these read VFLF…SARL and LGML…ISLL. Residue His-144 participates in Zn(2+) binding. Glu-145 is a catalytic residue. Position 148 (His-148) interacts with Zn(2+). Helical transmembrane passes span 159-179 and 199-219; these read LIQG…AYAL and ISSI…VMYF. Glu-224 serves as a coordination point for Zn(2+).

Belongs to the peptidase M48B family. The cofactor is Zn(2+).

The protein localises to the cell inner membrane. This chain is Protease HtpX homolog, found in Chlorobium luteolum (strain DSM 273 / BCRC 81028 / 2530) (Pelodictyon luteolum).